A 135-amino-acid chain; its full sequence is Small ribosomal subunit protein uS11 (135 aa).

Residues 1–22 are disordered; that stretch reads MPPKSRTAAGAKKVRRKEKKNV.

Belongs to the universal ribosomal protein uS11 family. In terms of assembly, part of the 30S ribosomal subunit. Interacts with proteins S7 and S18. Binds to IF-3.

Its function is as follows. Located on the platform of the 30S subunit, it bridges several disparate RNA helices of the 16S rRNA. Forms part of the Shine-Dalgarno cleft in the 70S ribosome. This Nocardioides sp. (strain ATCC BAA-499 / JS614) protein is Small ribosomal subunit protein uS11.